A 454-amino-acid chain; its full sequence is tRNA modification GTPase MnmE (454 aa).

Residues Arg-23, Glu-80, and Lys-120 each contribute to the (6S)-5-formyl-5,6,7,8-tetrahydrofolate site. In terms of domain architecture, TrmE-type G spans 216–377 (GMKVVIAGRP…LRNHLKQSMG (162 aa)). Asn-226 lines the K(+) pocket. Residues 226 to 231 (NAGKSS), 245 to 251 (TDIAGTT), 270 to 273 (DTAG), 335 to 338 (NKAD), and 358 to 360 (SAR) each bind GTP. Ser-230 is a binding site for Mg(2+). K(+)-binding residues include Thr-245, Ile-247, and Thr-250. Thr-251 serves as a coordination point for Mg(2+). A (6S)-5-formyl-5,6,7,8-tetrahydrofolate-binding site is contributed by Lys-454.

It belongs to the TRAFAC class TrmE-Era-EngA-EngB-Septin-like GTPase superfamily. TrmE GTPase family. Homodimer. Heterotetramer of two MnmE and two MnmG subunits. The cofactor is K(+).

The protein resides in the cytoplasm. Functionally, exhibits a very high intrinsic GTPase hydrolysis rate. Involved in the addition of a carboxymethylaminomethyl (cmnm) group at the wobble position (U34) of certain tRNAs, forming tRNA-cmnm(5)s(2)U34. The polypeptide is tRNA modification GTPase MnmE (Citrobacter koseri (strain ATCC BAA-895 / CDC 4225-83 / SGSC4696)).